The following is a 448-amino-acid chain: Methionine aminopeptidase 2 (448 aa).

The interval M1–D47 is disordered. Residues K24–S34 show a composition bias toward basic residues. H198 lines the substrate pocket. A divalent metal cation contacts are provided by D218, D229, and H298. H306 provides a ligand contact to substrate. A divalent metal cation contacts are provided by E331 and E429.

It belongs to the peptidase M24A family. Methionine aminopeptidase eukaryotic type 2 subfamily. The cofactor is Co(2+). It depends on Zn(2+) as a cofactor. Mn(2+) is required as a cofactor. Requires Fe(2+) as cofactor.

It is found in the cytoplasm. The enzyme catalyses Release of N-terminal amino acids, preferentially methionine, from peptides and arylamides.. Functionally, cotranslationally removes the N-terminal methionine from nascent proteins. The N-terminal methionine is often cleaved when the second residue in the primary sequence is small and uncharged (Met-Ala-, Cys, Gly, Pro, Ser, Thr, or Val). This is Methionine aminopeptidase 2 from Komagataella phaffii (strain GS115 / ATCC 20864) (Yeast).